The primary structure comprises 313 residues: Aspartate carbamoyltransferase catalytic subunit (313 aa).

Residues R54 and T55 each coordinate carbamoyl phosphate. K82 provides a ligand contact to L-aspartate. Carbamoyl phosphate-binding residues include R104, H132, and Q135. Residues R165 and R219 each coordinate L-aspartate. Carbamoyl phosphate contacts are provided by G260 and P261.

It belongs to the aspartate/ornithine carbamoyltransferase superfamily. ATCase family. In terms of assembly, heterododecamer (2C3:3R2) of six catalytic PyrB chains organized as two trimers (C3), and six regulatory PyrI chains organized as three dimers (R2).

It catalyses the reaction carbamoyl phosphate + L-aspartate = N-carbamoyl-L-aspartate + phosphate + H(+). Its pathway is pyrimidine metabolism; UMP biosynthesis via de novo pathway; (S)-dihydroorotate from bicarbonate: step 2/3. Catalyzes the condensation of carbamoyl phosphate and aspartate to form carbamoyl aspartate and inorganic phosphate, the committed step in the de novo pyrimidine nucleotide biosynthesis pathway. The protein is Aspartate carbamoyltransferase catalytic subunit of Thermobifida fusca (strain YX).